Consider the following 312-residue polypeptide: Olfactory receptor 2B8 (312 aa).

Topologically, residues 1–25 (MDQKNGSSFTGFILLGFSDRPQLEL) are extracellular. N-linked (GlcNAc...) asparagine glycosylation occurs at N5. Residues 26–49 (VLFVVLLIFYIFTLLGNKTIIVLS) form a helical membrane-spanning segment. The Cytoplasmic portion of the chain corresponds to 50 to 57 (HLDPHLHT). The helical transmembrane segment at 58–79 (PMYFFFSNLSFLDLCYTTGIVP) threads the bilayer. The Extracellular segment spans residues 80 to 100 (QLLVNLRGADKSISYGGCVVQ). C97 and C189 form a disulfide bridge. Residues 101-120 (LYISLGLGSTECVLLGVMVF) form a helical membrane-spanning segment. At 121 to 139 (DRYAAVCRPLHYTVVMHPC) the chain is on the cytoplasmic side. A helical membrane pass occupies residues 140 to 158 (LYVLMASTSWVIGFANSLL). The Extracellular portion of the chain corresponds to 159-195 (QTVLILLLTLCGRNKLEHFLCEVPPLLKLACVDTTMN). Residue N195 is glycosylated (N-linked (GlcNAc...) asparagine). The chain crosses the membrane as a helical span at residues 196–219 (ESELFFVSVIILLVPVALIIFSYS). The Cytoplasmic segment spans residues 220–236 (QIVRAVMRIKLATGQRK). A helical membrane pass occupies residues 237-259 (VFGTCGSHLTVVSLFYGTAIYAY). Residues 260-272 (LQPGNNYSQDQGK) lie on the Extracellular side of the membrane. An N-linked (GlcNAc...) asparagine glycan is attached at N265. The helical transmembrane segment at 273–292 (FISLFYTIITPMINPLIYTL) threads the bilayer. At 293 to 312 (RNKDVKGALKKVLWKNYDSR) the chain is on the cytoplasmic side.

The protein belongs to the G-protein coupled receptor 1 family.

The protein localises to the cell membrane. Functionally, odorant receptor. In Homo sapiens (Human), this protein is Olfactory receptor 2B8.